Reading from the N-terminus, the 316-residue chain is Porphobilinogen deaminase (316 aa).

Residue Cys245 is modified to S-(dipyrrolylmethanemethyl)cysteine.

The protein belongs to the HMBS family. As to quaternary structure, monomer. Dipyrromethane serves as cofactor.

It catalyses the reaction 4 porphobilinogen + H2O = hydroxymethylbilane + 4 NH4(+). It participates in porphyrin-containing compound metabolism; protoporphyrin-IX biosynthesis; coproporphyrinogen-III from 5-aminolevulinate: step 2/4. Its pathway is porphyrin-containing compound metabolism; chlorophyll biosynthesis. Tetrapolymerization of the monopyrrole PBG into the hydroxymethylbilane pre-uroporphyrinogen in several discrete steps. The sequence is that of Porphobilinogen deaminase from Prochlorococcus marinus (strain MIT 9312).